The following is a 140-amino-acid chain: Non-specific lipid transfer protein GPI-anchored 33 (140 aa).

The N-terminal stretch at 1 to 27 (MAYTNKVTISAAVATMMLFLAVTIVDA) is a signal peptide. Cystine bridges form between cysteine 40–cysteine 80, cysteine 52–cysteine 64, cysteine 65–cysteine 104, and cysteine 78–cysteine 112. Asparagine 91 carries an N-linked (GlcNAc...) asparagine glycan. Glycine 115 carries the GPI-anchor amidated glycine lipid modification. A propeptide spans 116–140 (DASGGSTNKIAASMVLLGLVASLFF) (removed in mature form).

Belongs to the plant LTP family.

It localises to the cell membrane. Functionally, probable lipid transfer protein. The sequence is that of Non-specific lipid transfer protein GPI-anchored 33 from Arabidopsis thaliana (Mouse-ear cress).